A 1744-amino-acid chain; its full sequence is Transcription initiation factor TFIID subunit 1 (1744 aa).

Disordered stretches follow at residues 1–65 (MNNT…EKNE), 248–275 (VSIRSGKPLNYRTPDDLPSTSSGPAPNS), 429–488 (PEDR…DNDP), 1001–1024 (QNQTLANTDPISTDDDSTDADSDN), 1071–1098 (TTNQVEKGEKKEEGEVTAEEKKSASQFG), and 1186–1213 (MKKNEEKAAHKVQKMTEKKVKPIKPPNP). Over residues 43–52 (ACSSASNGGS) the composition is skewed to polar residues. Basic and acidic residues predominate over residues 55-64 (VKMEPKVEKN). The segment covering 429 to 439 (PEDRRHDEGPD) has biased composition (basic and acidic residues). The span at 440 to 449 (HHHHHHHHRK) shows a compositional bias: basic residues. Residues 477 to 488 (ESTMAQFTDNDP) show a composition bias toward polar residues. A compositionally biased stretch (acidic residues) spans 1012-1024 (STDDDSTDADSDN). Coiled coils occupy residues 1019-1080 (DADS…KGEK), 1161-1204 (YAQM…TEKK), and 1282-1314 (NFAEIRKEQNREEKLKRKLAKMAEAAVRERQMA). Basic and acidic residues-rich tracts occupy residues 1076 to 1093 (EKGEKKEEGEVTAEEKKS) and 1186 to 1205 (MKKNEEKAAHKVQKMTEKKV). Residues 1319–1344 (YGGGASSSGGAGGGGSGIGGSTGGGI) are compositionally biased toward gly residues. A disordered region spans residues 1319–1391 (YGGGASSSGG…SKRRSSMMPE (73 aa)). A compositionally biased stretch (polar residues) spans 1354–1363 (SQISGTSSFL). Over residues 1372 to 1381 (GGNRNSSVSG) the composition is skewed to low complexity. Positions 1379–1386 (VSGSKRRS) match the Nuclear localization signal motif. Bromo domains lie at 1404-1512 (RARA…MIER) and 1537-1634 (YLLG…VKDQ). Residues 1666-1694 (DHMDEMEDHPTEEEEEDDDDEIMDDDMDI) show a composition bias toward acidic residues. 2 disordered regions span residues 1666–1702 (DHMDEMEDHPTEEEEEDDDDEIMDDDMDIDATGYSYD) and 1714–1744 (NDLAMSDSDEDERAEDVKRPANGDDNLLDSF).

It belongs to the TAF1 family. As to quaternary structure, component of the TFIID basal transcription factor complex, composed of TATA-box-binding protein tbp-1, and a number of TBP-associated factors (TAFs).

Its subcellular location is the nucleus. In terms of biological role, the TFIID basal transcription factor complex plays a major role in the initiation of RNA polymerase II (Pol II)-dependent transcription. TFIID recognizes and binds promoters via its subunit tbp-1, a TATA-box-binding protein, and promotes assembly of the pre-initiation complex (PIC). The TFIID complex consists of tbp-1 and TBP-associated factors (TAFs), including taf-1. May regulate RNA polymerase II activity and thereby may control transcription initiation by RNA polymerase II. Required for early embryonic development. Essential for embryonic transcription of several genes. This chain is Transcription initiation factor TFIID subunit 1, found in Caenorhabditis elegans.